Consider the following 617-residue polypeptide: Protein AsmA (617 aa).

Topologically, residues 1–3 (MRR) are cytoplasmic. A helical transmembrane segment spans residues 4 to 24 (FLTTLMILLVVLVAGLSALVL). The Periplasmic portion of the chain corresponds to 25 to 617 (LVNPNDFRDY…KDVKKLLEKM (593 aa)). The segment covering 302–319 (TANGENGAAQQGQSQSTL) has biased composition (polar residues). Residues 302 to 321 (TANGENGAAQQGQSQSTLPR) are disordered.

Belongs to the AsmA family.

Its subcellular location is the cell inner membrane. Could be involved in the assembly of outer membrane proteins. May indirectly influence the assembly of outer membrane proteins, potentially by altering outer membrane fluidity. Inhibits the assembly of mutant forms of outer membrane protein F (OmpF). The protein is Protein AsmA of Escherichia coli (strain K12).